Reading from the N-terminus, the 121-residue chain is Large ribosomal subunit protein uL22 (121 aa).

This sequence belongs to the universal ribosomal protein uL22 family. As to quaternary structure, part of the 50S ribosomal subunit.

Functionally, this protein binds specifically to 23S rRNA; its binding is stimulated by other ribosomal proteins, e.g. L4, L17, and L20. It is important during the early stages of 50S assembly. It makes multiple contacts with different domains of the 23S rRNA in the assembled 50S subunit and ribosome. Its function is as follows. The globular domain of the protein is located near the polypeptide exit tunnel on the outside of the subunit, while an extended beta-hairpin is found that lines the wall of the exit tunnel in the center of the 70S ribosome. The protein is Large ribosomal subunit protein uL22 of Synechococcus sp. (strain CC9605).